A 524-amino-acid polypeptide reads, in one-letter code: MLVKVFSFFILMITMVVIGVSKEYCDDKHSCQNFLLELKTASSSLSEIRRRDLLIIVLKNSVRKIDMAMIGVMEDTKQHEEMENDKLCLKEDTNLFEEMMESAKDRMIRSVEELLGGEFPYLGSYENIHTWLSGVLTSYITCIDEIGDGAYKRRVEPQLQDLISKAKVALALFISISPRDNTELNSVVPNSPSWLSHVDKKDLYLNAEALKKIADVVVAKDGTGKYNTVNAAIAAAPQHSHKRFIIYIKTGIYDEIVAIENTKPNLTLIGDGQDSTIITGNLSASNVRRTFYTATFASNGKGFIGVDMCFRNTVGPAKGPAVALRVSGDMSVIYRCRVEGYQDALYPHIDRQFYRECFITGTVDFICGNAAAVFQFCQIVARQPNMGQSNFITAQSRETKDDKSGFSIQNCNITASSDLDTATVKTYLGRPWRIFSTVAVLQSFIGDLVDPAGWTPWEGETGLSTLHYREYQNRGPGAVTSRRVKWSGFKVMKDPKQATEFTVAKLLDGETWLKESRIPYKSGL.

An N-terminal signal peptide occupies residues methionine 1–lysine 22. The tract at residues glutamate 23–leucine 172 is pectinesterase inhibitor 42. The segment at aspartate 215–glutamate 510 is pectinesterase 42. 2 N-linked (GlcNAc...) asparagine glycosylation sites follow: asparagine 265 and asparagine 281. Threonine 290 contacts substrate. The active-site Proton donor; for pectinesterase activity is the aspartate 343. Residues cysteine 357 and cysteine 377 are joined by a disulfide bond. Residue aspartate 364 is the Nucleophile; for pectinesterase activity of the active site. An N-linked (GlcNAc...) asparagine glycan is attached at asparagine 412. Residues arginine 430 and tryptophan 432 each contribute to the substrate site.

This sequence in the N-terminal section; belongs to the PMEI family. It in the C-terminal section; belongs to the pectinesterase family. In terms of tissue distribution, expressed in siliques but not in flower buds.

It localises to the secreted. The protein localises to the cell wall. It carries out the reaction [(1-&gt;4)-alpha-D-galacturonosyl methyl ester](n) + n H2O = [(1-&gt;4)-alpha-D-galacturonosyl](n) + n methanol + n H(+). It participates in glycan metabolism; pectin degradation; 2-dehydro-3-deoxy-D-gluconate from pectin: step 1/5. In terms of biological role, acts in the modification of cell walls via demethylesterification of cell wall pectin. This chain is Probable pectinesterase/pectinesterase inhibitor 42 (PME42), found in Arabidopsis thaliana (Mouse-ear cress).